A 195-amino-acid chain; its full sequence is Cytochrome c oxidase assembly protein CtaG (195 aa).

The Cytoplasmic segment spans residues 1 to 9; the sequence is MALNGPQKT. A helical; Signal-anchor for type II membrane protein transmembrane segment spans residues 10-30; the sequence is VVQLVGVVVLMGGLAWASVPF. At 31 to 195 the chain is on the periplasmic side; the sequence is YDWFCRVTGF…DTSGAETELN (165 aa).

The protein belongs to the COX11/CtaG family.

The protein resides in the cell inner membrane. Functionally, exerts its effect at some terminal stage of cytochrome c oxidase synthesis, probably by being involved in the insertion of the copper B into subunit I. The chain is Cytochrome c oxidase assembly protein CtaG from Ruegeria sp. (strain TM1040) (Silicibacter sp.).